A 428-amino-acid polypeptide reads, in one-letter code: Glutamate-1-semialdehyde 2,1-aminomutase (428 aa).

Residue K265 is modified to N6-(pyridoxal phosphate)lysine.

This sequence belongs to the class-III pyridoxal-phosphate-dependent aminotransferase family. HemL subfamily. As to quaternary structure, homodimer. It depends on pyridoxal 5'-phosphate as a cofactor.

The protein localises to the cytoplasm. It catalyses the reaction (S)-4-amino-5-oxopentanoate = 5-aminolevulinate. Its pathway is porphyrin-containing compound metabolism; protoporphyrin-IX biosynthesis; 5-aminolevulinate from L-glutamyl-tRNA(Glu): step 2/2. This chain is Glutamate-1-semialdehyde 2,1-aminomutase, found in Aeromonas hydrophila subsp. hydrophila (strain ATCC 7966 / DSM 30187 / BCRC 13018 / CCUG 14551 / JCM 1027 / KCTC 2358 / NCIMB 9240 / NCTC 8049).